We begin with the raw amino-acid sequence, 447 residues long: Ribosomal protein uS12 methylthiotransferase RimO (447 aa).

Residues 10–120 (PKVGFVSLGC…VVNAVHDVVP (111 aa)) form the MTTase N-terminal domain. Cys19, Cys55, Cys84, Cys153, Cys157, and Cys160 together coordinate [4Fe-4S] cluster. The 239-residue stretch at 139–377 (LTPRHYAYLK…MAHQQAISAA (239 aa)) folds into the Radical SAM core domain. One can recognise a TRAM domain in the interval 380 to 447 (QMKIGKEIEV…DEYDLWAEML (68 aa)).

This sequence belongs to the methylthiotransferase family. RimO subfamily. [4Fe-4S] cluster serves as cofactor.

It localises to the cytoplasm. It carries out the reaction L-aspartate(89)-[ribosomal protein uS12]-hydrogen + (sulfur carrier)-SH + AH2 + 2 S-adenosyl-L-methionine = 3-methylsulfanyl-L-aspartate(89)-[ribosomal protein uS12]-hydrogen + (sulfur carrier)-H + 5'-deoxyadenosine + L-methionine + A + S-adenosyl-L-homocysteine + 2 H(+). Catalyzes the methylthiolation of an aspartic acid residue of ribosomal protein uS12. The polypeptide is Ribosomal protein uS12 methylthiotransferase RimO (Pseudomonas savastanoi pv. phaseolicola (strain 1448A / Race 6) (Pseudomonas syringae pv. phaseolicola (strain 1448A / Race 6))).